Reading from the N-terminus, the 195-residue chain is Nicotinamide riboside kinase 1 (195 aa).

Residue 10 to 18 coordinates ATP; sequence GVTNGGKTT. Mg(2+) contacts are provided by T17 and D36. The Proton acceptor role is filled by D36. Residues 36–39 and 55–56 contribute to the substrate site; these read DDFF and YD. Residue R128 participates in ATP binding. Substrate-binding positions include R129 and 134 to 135; that span reads YE. ATP contacts are provided by residues 132–134 and 172–174; these read RVY and RSE.

It belongs to the uridine kinase family. NRK subfamily. In terms of assembly, monomer.

It catalyses the reaction beta-nicotinamide D-riboside + ATP = beta-nicotinamide D-ribonucleotide + ADP + H(+). It carries out the reaction beta-D-ribosylnicotinate + ATP = nicotinate beta-D-ribonucleotide + ADP + H(+). It functions in the pathway cofactor biosynthesis; NAD(+) biosynthesis. Its function is as follows. Catalyzes the phosphorylation of nicotinamide riboside (NR) and nicotinic acid riboside (NaR) to form nicotinamide mononucleotide (NMN) and nicotinic acid mononucleotide (NaMN). This is Nicotinamide riboside kinase 1 (Nmrk1) from Rattus norvegicus (Rat).